A 200-amino-acid polypeptide reads, in one-letter code: Probable GTP-binding protein EngB (200 aa).

The EngB-type G domain maps to 24 to 199 (EGAEVAFAGR…RGVIGGWLGL (176 aa)). GTP is bound by residues 32 to 39 (GRSNAGKS), 59 to 63 (GRTQQ), 77 to 80 (DLPG), 144 to 147 (TKAD), and 178 to 180 (FSG). Residues Ser-39 and Thr-61 each contribute to the Mg(2+) site.

The protein belongs to the TRAFAC class TrmE-Era-EngA-EngB-Septin-like GTPase superfamily. EngB GTPase family. It depends on Mg(2+) as a cofactor.

Necessary for normal cell division and for the maintenance of normal septation. The sequence is that of Probable GTP-binding protein EngB from Stenotrophomonas maltophilia (strain K279a).